The sequence spans 285 residues: Bifunctional protein FolD (285 aa).

NADP(+)-binding positions include 165–167 (GRS) and Ser190.

Belongs to the tetrahydrofolate dehydrogenase/cyclohydrolase family. As to quaternary structure, homodimer.

The enzyme catalyses (6R)-5,10-methylene-5,6,7,8-tetrahydrofolate + NADP(+) = (6R)-5,10-methenyltetrahydrofolate + NADPH. It carries out the reaction (6R)-5,10-methenyltetrahydrofolate + H2O = (6R)-10-formyltetrahydrofolate + H(+). It functions in the pathway one-carbon metabolism; tetrahydrofolate interconversion. Its function is as follows. Catalyzes the oxidation of 5,10-methylenetetrahydrofolate to 5,10-methenyltetrahydrofolate and then the hydrolysis of 5,10-methenyltetrahydrofolate to 10-formyltetrahydrofolate. The chain is Bifunctional protein FolD from Streptococcus pneumoniae (strain ATCC BAA-255 / R6).